The chain runs to 457 residues: MALWGGRFTQAADQRFKQFNDSLRFDYRLAEQDIVGSVAWSKALVTVGVLTAEEQAQLEEALNVLLEDVRARPQQILESDAEDIHSWVEGKLIDKVGQLGKKLHTGRSRNDQVATDLKLWCKDTVSELLTANRQLQSALVETAQNNQDAVMPGYTHLQRAQPVTFAHWCLAYVEMLARDESRLQDALKRLDVSPLGCGALAGTAYEIDREQLAGWLGFASATRNSLDSVSDRDHVLELLSAAAIGMVHLSRFAEDLIFFNTGEAGFVELSDRVTSGSSLMPQKKNPDALELIRGKCGRVQGALTGMMMTLKGLPLAYNKDMQEDKEGLFDALDTWLDCLHMAALVLDGIQVKRPRCQEAAQQGYANATELADYLVAKGVPFREAHHIVGEAVVEAIRQGKPLEDLPLSELQKFSQVIGEDVYPILSLQSCLEKRAAKGGVSPQQVAQAIAFAQARLE.

This sequence belongs to the lyase 1 family. Argininosuccinate lyase subfamily.

The protein localises to the cytoplasm. The catalysed reaction is 2-(N(omega)-L-arginino)succinate = fumarate + L-arginine. It participates in amino-acid biosynthesis; L-arginine biosynthesis; L-arginine from L-ornithine and carbamoyl phosphate: step 3/3. This Shigella flexneri serotype 5b (strain 8401) protein is Argininosuccinate lyase.